The sequence spans 82 residues: UPF0153 protein VC_1057 (82 aa).

It belongs to the UPF0153 family.

The chain is UPF0153 protein VC_1057 from Vibrio cholerae serotype O1 (strain ATCC 39315 / El Tor Inaba N16961).